A 276-amino-acid polypeptide reads, in one-letter code: Urease accessory protein UreD (276 aa).

This sequence belongs to the UreD family. UreD, UreF and UreG form a complex that acts as a GTP-hydrolysis-dependent molecular chaperone, activating the urease apoprotein by helping to assemble the nickel containing metallocenter of UreC. The UreE protein probably delivers the nickel.

Its subcellular location is the cytoplasm. Functionally, required for maturation of urease via the functional incorporation of the urease nickel metallocenter. This Polaromonas sp. (strain JS666 / ATCC BAA-500) protein is Urease accessory protein UreD.